Reading from the N-terminus, the 328-residue chain is NADH-quinone oxidoreductase subunit H 2 (328 aa).

Transmembrane regions (helical) follow at residues 3 to 23 (LIVALGVIVFKVALVIAILLL), 77 to 97 (FLFKLAPILALAPPFVVFAAI), 119 to 139 (VALLFVFAVIGLEVYGVIFGG), 165 to 185 (MGFAVIGVVMLAQSMSLLDIV), 191 to 211 (VWNVVYQPIGFFVFFVAGLAE), 250 to 270 (MVLVSVLTVILFFGGWNGVLI), 272 to 292 (LPPLLWFLLKVAFFVYLFMWF), and 307 to 327 (IGWKVLLPLSLANIIISGVVF).

It belongs to the complex I subunit 1 family. In terms of assembly, NDH-1 is composed of 14 different subunits. Subunits NuoA, H, J, K, L, M, N constitute the membrane sector of the complex.

Its subcellular location is the cell inner membrane. It catalyses the reaction a quinone + NADH + 5 H(+)(in) = a quinol + NAD(+) + 4 H(+)(out). NDH-1 shuttles electrons from NADH, via FMN and iron-sulfur (Fe-S) centers, to quinones in the respiratory chain. The immediate electron acceptor for the enzyme in this species is believed to be ubiquinone. Couples the redox reaction to proton translocation (for every two electrons transferred, four hydrogen ions are translocated across the cytoplasmic membrane), and thus conserves the redox energy in a proton gradient. This subunit may bind ubiquinone. The sequence is that of NADH-quinone oxidoreductase subunit H 2 from Rhizobium meliloti (strain 1021) (Ensifer meliloti).